Here is a 360-residue protein sequence, read N- to C-terminus: Phospho-N-acetylmuramoyl-pentapeptide-transferase (360 aa).

Helical transmembrane passes span 21–41 (YITFRAIMALLTAMGIGLWIG), 73–93 (TMGGIMILIAIGVSTLLWADL), 98–118 (VWFVLFVLFGYGAVGFVDDYW), 132–152 (WKYFWLSVIALIAVFGIYAVG), 168–188 (FMPQLGIFFIILSYFVIVGTS), 199–219 (GLAIVPTIMVASAFALIAWAT), 236–256 (AGELVILCTAIVGAGLGFLWY), 263–283 (VFMGDVGSLSLGGALGTIAVL), 288–308 (LLLVIMGGVFVVEALSVILQV), and 338–358 (VIVCFWIITLMLVLIGLVTLK).

This sequence belongs to the glycosyltransferase 4 family. MraY subfamily. Requires Mg(2+) as cofactor.

Its subcellular location is the cell inner membrane. It carries out the reaction UDP-N-acetyl-alpha-D-muramoyl-L-alanyl-gamma-D-glutamyl-meso-2,6-diaminopimeloyl-D-alanyl-D-alanine + di-trans,octa-cis-undecaprenyl phosphate = di-trans,octa-cis-undecaprenyl diphospho-N-acetyl-alpha-D-muramoyl-L-alanyl-D-glutamyl-meso-2,6-diaminopimeloyl-D-alanyl-D-alanine + UMP. The protein operates within cell wall biogenesis; peptidoglycan biosynthesis. Its function is as follows. Catalyzes the initial step of the lipid cycle reactions in the biosynthesis of the cell wall peptidoglycan: transfers peptidoglycan precursor phospho-MurNAc-pentapeptide from UDP-MurNAc-pentapeptide onto the lipid carrier undecaprenyl phosphate, yielding undecaprenyl-pyrophosphoryl-MurNAc-pentapeptide, known as lipid I. The sequence is that of Phospho-N-acetylmuramoyl-pentapeptide-transferase from Actinobacillus pleuropneumoniae serotype 7 (strain AP76).